The chain runs to 92 residues: Small ribosomal subunit protein uS19c (92 aa).

The protein belongs to the universal ribosomal protein uS19 family.

It is found in the plastid. The protein resides in the chloroplast. Its function is as follows. Protein S19 forms a complex with S13 that binds strongly to the 16S ribosomal RNA. This Ostreococcus tauri protein is Small ribosomal subunit protein uS19c.